The following is a 211-amino-acid chain: Redox-sensing transcriptional repressor Rex (211 aa).

The segment at residues 17–56 is a DNA-binding region (H-T-H motif); sequence LYYRFVSILKGKGIDRVNSKTISEALQIDSATIRRDFSYF. Residue 91-96 coordinates NAD(+); the sequence is GIGNLG.

Belongs to the transcriptional regulatory Rex family. In terms of assembly, homodimer.

The protein resides in the cytoplasm. Functionally, modulates transcription in response to changes in cellular NADH/NAD(+) redox state. The protein is Redox-sensing transcriptional repressor Rex of Staphylococcus epidermidis (strain ATCC 35984 / DSM 28319 / BCRC 17069 / CCUG 31568 / BM 3577 / RP62A).